We begin with the raw amino-acid sequence, 152 residues long: Transcriptional regulator MraZ (152 aa).

2 consecutive SpoVT-AbrB domains span residues 7–54 and 83–126; these read INSI…TMDE and ASEM…SQEA.

Belongs to the MraZ family. As to quaternary structure, forms oligomers.

The protein resides in the cytoplasm. It is found in the nucleoid. The protein is Transcriptional regulator MraZ of Hydrogenovibrio crunogenus (strain DSM 25203 / XCL-2) (Thiomicrospira crunogena).